The chain runs to 1673 residues: NBPF family member NBPF26 (1673 aa).

4 consecutive EGF-like domains span residues 24–63, 64–102, 105–143, and 144–180; these read HALQ…EYCQ, HRDP…EDCQ, TPHP…KECQ, and WTDA…QKCE. 17 disulfides stabilise this stretch: Cys-28–Cys-41, Cys-35–Cys-51, Cys-53–Cys-62, Cys-68–Cys-79, Cys-73–Cys-90, Cys-92–Cys-101, Cys-109–Cys-121, Cys-115–Cys-131, Cys-133–Cys-142, Cys-148–Cys-159, Cys-153–Cys-168, Cys-170–Cys-179, Cys-186–Cys-198, Cys-192–Cys-207, Cys-209–Cys-218, Cys-225–Cys-236, and Cys-230–Cys-246. The EGF-like 5; calcium-binding domain maps to 182-219; that stretch reads DVNECDIPGHCQHGGTCLNLPGSYQCQCLQGFTGQYCD. The region spanning 221 to 258 is the EGF-like 6 domain; that stretch reads LYVPCAHSPCVNGGTCRQTGDFTFECNCLPVPDSTSSA. A coiled-coil region spans residues 337–381; sequence RQFKEEKLAEQLKQAEELRQYKVLVHSQERELTQLKEKLREGRDA. Disordered regions lie at residues 423-463, 713-734, and 782-828; these read KLSP…KVPE, EKVQ…EVPE, and WEDA…EGYS. A compositionally biased stretch (acidic residues) spans 427–443; the sequence is ENDEDEDEDVQVEEDEK. 13 consecutive Olduvai domains span residues 427-521, 698-790, 791-879, 882-937, 938-1029, 1032-1104, 1107-1162, 1163-1255, 1256-1348, 1351-1423, 1426-1481, 1482-1574, and 1575-1673; these read ENDE…NILP, ENDN…HIIP, ENES…ATGP, SREL…VDMD, EIEK…PSCP, SGEL…PSCP, SREL…LDVD, RIKK…RSKK, ERRR…PSCP, SREL…PSCP, and ERRR…IFPQ. Positions 452-463 are enriched in basic and acidic residues; sequence EVQKTEESKVPE. 2 stretches are compositionally biased toward acidic residues: residues 792–801 and 812–824; these read NESDDEEEEE and ESEE…ESWD. The interval 1242–1280 is disordered; it reads KGKGKKRRGRRSKKERRRGRKEGEEDQNPPCPRLSRELL. Positions 1243-1261 are enriched in basic residues; the sequence is GKGKKRRGRRSKKERRRGR. The segment at 1561 to 1594 is disordered; the sequence is KGKGKKRRGRRSKKERRRGRKEGEEDQNPPCPRL. Residues 1562 to 1580 show a composition bias toward basic residues; the sequence is GKGKKRRGRRSKKERRRGR.

Belongs to the NBPF family.

The protein localises to the cytoplasm. This Homo sapiens (Human) protein is NBPF family member NBPF26.